The sequence spans 171 residues: Putative MucR family transcriptional regulatory protein y4pD (171 aa).

It belongs to the ros/MucR family.

The polypeptide is Putative MucR family transcriptional regulatory protein y4pD (Sinorhizobium fredii (strain NBRC 101917 / NGR234)).